We begin with the raw amino-acid sequence, 499 residues long: E3 ubiquitin-protein ligase TRIM69 (499 aa).

The interval 1–152 is necessary for nuclear localization; the sequence is MEVSSRPPSN…SMGQSKDFLQ (152 aa). An RING-type zinc finger spans residues 41–82; the sequence is CPLCNDWFRDPLMLTCGHNFCQACIQNYWKMQAKETFCPECK. The stretch at 160–265 forms a coiled coil; the sequence is FTEELAIYQS…NIQARMEQQN (106 aa). A B30.2/SPRY domain is found at 305-499; sequence PIQYTIWREM…KEPLHIVHPQ (195 aa). A Phosphoserine modification is found at Ser-341.

It belongs to the TRIM/RBCC family. Homo-multimer; required for antiviral activity. Interacts with PML. Phosphorylated. Phosphorylation is necessary for nuclear localization.

It localises to the cytoplasm. It is found in the nucleus. Its subcellular location is the nucleus speckle. The protein resides in the cytoskeleton. The protein localises to the microtubule organizing center. It localises to the centrosome. The catalysed reaction is S-ubiquitinyl-[E2 ubiquitin-conjugating enzyme]-L-cysteine + [acceptor protein]-L-lysine = [E2 ubiquitin-conjugating enzyme]-L-cysteine + N(6)-ubiquitinyl-[acceptor protein]-L-lysine.. It participates in protein modification; protein ubiquitination. E3 ubiquitin ligase that plays an important role in antiviral immunity by restricting different viral infections including dengue virus or vesicular stomatitis indiana virus. Ubiquitinates viral proteins such as dengue virus NS3 thereby limiting infection. In addition, acts as a key mediator of type I interferon induced microtubule stabilization by directly associating to microtubules independently of its E3 ligase activity. Also plays a role in cataract formation together with TP53. Mechanistically, inhibits UVB-induced cell apoptosis and reactive oxygen species (ROS) production by inducing TP53 ubiquitination. Regulates centrosome dynamics and mitotic progression by ubiquitinating STK3/MST2; leading to its redistribution to the perinuclear cytoskeleton and subsequent phosphorylation by PLK1. The sequence is that of E3 ubiquitin-protein ligase TRIM69 (Trim69) from Rattus norvegicus (Rat).